The following is a 37-amino-acid chain: Photosystem II reaction center protein T (37 aa).

The chain crosses the membrane as a helical span at residues Ala-3–Phe-23.

Belongs to the PsbT family. As to quaternary structure, PSII is composed of 1 copy each of membrane proteins PsbA, PsbB, PsbC, PsbD, PsbE, PsbF, PsbH, PsbI, PsbJ, PsbK, PsbL, PsbM, PsbT, PsbY, PsbZ, Psb30/Ycf12, at least 3 peripheral proteins of the oxygen-evolving complex and a large number of cofactors. It forms dimeric complexes.

It is found in the plastid. It localises to the chloroplast thylakoid membrane. In terms of biological role, found at the monomer-monomer interface of the photosystem II (PS II) dimer, plays a role in assembly and dimerization of PSII. PSII is a light-driven water plastoquinone oxidoreductase, using light energy to abstract electrons from H(2)O, generating a proton gradient subsequently used for ATP formation. This chain is Photosystem II reaction center protein T, found in Cucumis sativus (Cucumber).